The chain runs to 341 residues: Methionine import ATP-binding protein MetN 3 (341 aa).

An ABC transporter domain is found at 2 to 241; it reads ILLENVKKIY…PKQDITKRFV (240 aa). Residue 38–45 coordinates ATP; the sequence is GYSGAGKS.

It belongs to the ABC transporter superfamily. Methionine importer (TC 3.A.1.24) family. As to quaternary structure, the complex is composed of two ATP-binding proteins (MetN), two transmembrane proteins (MetI) and a solute-binding protein (MetQ).

It localises to the cell membrane. The catalysed reaction is L-methionine(out) + ATP + H2O = L-methionine(in) + ADP + phosphate + H(+). The enzyme catalyses D-methionine(out) + ATP + H2O = D-methionine(in) + ADP + phosphate + H(+). In terms of biological role, part of the ABC transporter complex MetNIQ involved in methionine import. Responsible for energy coupling to the transport system. The sequence is that of Methionine import ATP-binding protein MetN 3 from Bacillus cereus (strain ATCC 14579 / DSM 31 / CCUG 7414 / JCM 2152 / NBRC 15305 / NCIMB 9373 / NCTC 2599 / NRRL B-3711).